The sequence spans 419 residues: MTFSFDTAAAQGAVIKVIGVGGGGGNAINRMVDEGVTGVEFIAANTDVQALSSTKAETVIQLGPKLTRGLGAGGQPEVGRKAAEESEETLTEAISGADMVFITAGMGGGSGTGAAPVIARIAKDLGALTVGVVTRPFGFEGSKRGQFAVEGINQLREHVDTLLIISNNNLLEIVDKKTPLLEALSEADNVLRQGVQGITDLITNPGLINLDFADVKTVMANKGNALMGIGIGSGEERVVEAARKAIYSPLLETTIDGAEDVIVNVTGGLDLTLIEAEEASQIVNQAAGQGVNIWLGTSIDESMRDEIRVTVVATGVRQDRVEKVVAPQARSATNYRETVKPAHSHGFDRHFDMAETVELPKQNPRRLEPTQASAFGDWDLRRESIVRTTDSVVSPVERFEAPISQDEDELDTPPFFKNR.

GTP-binding positions include 22–26, 109–111, Glu140, Arg144, and Asp188; these read GGGGN and GSG. The disordered stretch occupies residues 397–419; it reads ERFEAPISQDEDELDTPPFFKNR.

Belongs to the FtsZ family. In terms of assembly, homodimer. Polymerizes to form a dynamic ring structure in a strictly GTP-dependent manner. Interacts directly with several other division proteins. Interacts with CcrZ; the interaction is direct.

The protein resides in the cytoplasm. Essential cell division protein that forms a contractile ring structure (Z ring) at the future cell division site. The regulation of the ring assembly controls the timing and the location of cell division. One of the functions of the FtsZ ring is to recruit other cell division proteins to the septum to produce a new cell wall between the dividing cells. Binds GTP and shows GTPase activity. This Streptococcus pneumoniae serotype 2 (strain D39 / NCTC 7466) protein is Cell division protein FtsZ.